The following is a 446-amino-acid chain: MTLFHRLDLIDPYTCTPLIVRETSIVEPSSLFLGFPSFIDEDIEDLFEFSSPNPLDLFETVTDLVKIKKSPSSCKYKVIRRRLEPEYPLKYLCDRVSDLESKFDRLVSPKSDRKYTLTKEIKGSGERKYKWEAEIQGPLERKYKLEAEIEGSGERKYRWTTEIKGGKKDEEGLKLAALKKEKAKAKAIAAAEAEKKKNKNKKKSYNWTTEVKSERENGEVSHTYIIKATTGGEKKKKHEEKEKKEKIETKSKKKEKTRVVVIEEEEEEDDESSEHGAIVLRKAFSRRNGAVRTKKGKNKEMPPEYAAVMIQRAFKAYLIRRSKSLRALRDLAIAKTKLKELRASFHNFSYRRLIARDGEERQKFSEKIIVLLLTVDAIEGVDVMVRGAKRSMVDELEAMLDVVDPQPQGKSLSMRRRTFDMPDSLIRKEIAEGVTQIVQMLETEEE.

A disordered region spans residues 230–252; that stretch reads TGGEKKKKHEEKEKKEKIETKSK. Residues 239–250 show a composition bias toward basic and acidic residues; it reads EEKEKKEKIETK. The IQ domain maps to 303-332; that stretch reads PEYAAVMIQRAFKAYLIRRSKSLRALRDLA. The BAG domain maps to 330-407; that stretch reads DLAIAKTKLK…AMLDVVDPQP (78 aa). Thr-443 carries the phosphothreonine modification.

Binds to the ATPase domain of HSP70/HSC70 chaperones. Interacts with HSP70-11/BIP2.

The protein localises to the endoplasmic reticulum. In terms of biological role, co-chaperone that regulates diverse cellular pathways, such as programmed cell death and stress responses. Necessary for the proper maintenance of the unfolded protein response (UPR) during heat and cold tolerance. This is BAG family molecular chaperone regulator 7 (BAG7) from Arabidopsis thaliana (Mouse-ear cress).